Consider the following 633-residue polypeptide: Chitinase 2 (633 aa).

The GH18 domain occupies 151–602 (PKLSAYITDW…NAAREGLGYV (452 aa)). Chitin contacts are provided by residues 275-276 (QN) and 306-309 (GGWS). E349 functions as the Proton donor in the catalytic mechanism. Residues Y350, 422–425 (MSYD), and W582 contribute to the chitin site.

It belongs to the glycosyl hydrolase 18 family. In terms of assembly, semipurified toxin complex consists of at least YenA1-YenA2-YenB-YenC1-YenC2-Chi1-Chi2. The Yen-TC:K9 subcomplex is about 26 nm tall and 22 nm in diameter with 5-fold symmetry and 5 copies of YenA1, YenA2, Chi1 and Chi2; the chitinase subunits may be solvent accessible on the exterior the complex. The Yen-TC:K9 subcomplex has no insecticidal activity. The native complex with additional YenB, YenC1 and YenC2 subunits is 16 nm taller and is insecticidal; the toxicity-conferring subunits are present at about 1 copy each.

It is found in the secreted. The enzyme catalyses Random endo-hydrolysis of N-acetyl-beta-D-glucosaminide (1-&gt;4)-beta-linkages in chitin and chitodextrins.. Its activity is regulated as follows. Toxin complex is secreted when grown at 25 degrees Celsius or less; at higher temperatures the proteins are present intracellularly but not secreted. In terms of biological role, part of an orally active toxin complex (TC) with strong insecticidal effects on larvae of the Coleoptera Costelytra zealandica, Acrossidius tasmania and Adoryphorus couloni and some Lepidoptera larvae. The TC has an endochitinase activity. This subunit might aid infection by degradation of the larval peritrophic membrane. The polypeptide is Chitinase 2 (Yersinia entomophaga).